Reading from the N-terminus, the 1637-residue chain is Endoribonuclease Dicer homolog 3b (1637 aa).

The interval Met1–Thr40 is disordered. Positions Leu9–Cys19 are enriched in pro residues. Residues Arg20 to Gly29 are compositionally biased toward basic residues. The Helicase ATP-binding domain maps to Val46–Gln222. Leu59–Thr66 is a binding site for ATP. The DECH box signature appears at Asp169 to His172. In terms of domain architecture, Helicase C-terminal spans Ser404–Ser556. One can recognise a Dicer dsRNA-binding fold domain in the interval Cys581–Thr671. One can recognise a PAZ domain in the interval Glu882 to Asp1006. One can recognise an RNase III 1 domain in the interval Ala1031–Gly1200. Residues Asp1214, Asp1309, and Ser1312 each coordinate Mg(2+). The RNase III 2 domain maps to Ile1241–Asp1389. 2 consecutive DRBM domains span residues Leu1412–Gln1481 and Gly1545–Glu1629.

The protein belongs to the helicase family. Dicer subfamily. In terms of assembly, may interact with ARGONAUTE1 or PINHEAD through their common PAZ domains. Mg(2+) is required as a cofactor. Mn(2+) serves as cofactor.

The protein localises to the nucleus. Probably involved in the RNA silencing pathway. May cleave double-stranded RNA to produce short 21-24 nucleotides (nt) RNAs which target the selective destruction of complementary RNAs. This is Endoribonuclease Dicer homolog 3b (DCL3B) from Oryza sativa subsp. japonica (Rice).